We begin with the raw amino-acid sequence, 1370 residues long: DNA-directed RNA polymerase subunit beta (1370 aa).

This sequence belongs to the RNA polymerase beta chain family. As to quaternary structure, the RNAP catalytic core consists of 2 alpha, 1 beta, 1 beta' and 1 omega subunit. When a sigma factor is associated with the core the holoenzyme is formed, which can initiate transcription.

The enzyme catalyses RNA(n) + a ribonucleoside 5'-triphosphate = RNA(n+1) + diphosphate. Functionally, DNA-dependent RNA polymerase catalyzes the transcription of DNA into RNA using the four ribonucleoside triphosphates as substrates. The sequence is that of DNA-directed RNA polymerase subunit beta from Polaromonas naphthalenivorans (strain CJ2).